We begin with the raw amino-acid sequence, 358 residues long: Phosphoserine aminotransferase (358 aa).

Residue arginine 41 coordinates L-glutamate. Pyridoxal 5'-phosphate is bound by residues 75–76, tryptophan 100, threonine 148, aspartate 167, and glutamine 190; that span reads AS. Lysine 191 is modified (N6-(pyridoxal phosphate)lysine). 233-234 provides a ligand contact to pyridoxal 5'-phosphate; that stretch reads NT.

This sequence belongs to the class-V pyridoxal-phosphate-dependent aminotransferase family. SerC subfamily. As to quaternary structure, homodimer. Pyridoxal 5'-phosphate serves as cofactor.

It localises to the cytoplasm. It catalyses the reaction O-phospho-L-serine + 2-oxoglutarate = 3-phosphooxypyruvate + L-glutamate. The enzyme catalyses 4-(phosphooxy)-L-threonine + 2-oxoglutarate = (R)-3-hydroxy-2-oxo-4-phosphooxybutanoate + L-glutamate. Its pathway is amino-acid biosynthesis; L-serine biosynthesis; L-serine from 3-phospho-D-glycerate: step 2/3. It participates in cofactor biosynthesis; pyridoxine 5'-phosphate biosynthesis; pyridoxine 5'-phosphate from D-erythrose 4-phosphate: step 3/5. Functionally, catalyzes the reversible conversion of 3-phosphohydroxypyruvate to phosphoserine and of 3-hydroxy-2-oxo-4-phosphonooxybutanoate to phosphohydroxythreonine. The sequence is that of Phosphoserine aminotransferase from Campylobacter jejuni (strain RM1221).